The following is a 314-amino-acid chain: Formimidoylglutamase (314 aa).

Mn(2+) is bound by residues His-127, Asp-151, His-153, Asp-155, Asp-239, and Asp-241.

Belongs to the arginase family. The cofactor is Mn(2+).

The catalysed reaction is N-formimidoyl-L-glutamate + H2O = formamide + L-glutamate. It functions in the pathway amino-acid degradation; L-histidine degradation into L-glutamate; L-glutamate from N-formimidoyl-L-glutamate (hydrolase route): step 1/1. Functionally, catalyzes the conversion of N-formimidoyl-L-glutamate to L-glutamate and formamide. This chain is Formimidoylglutamase, found in Corynebacterium efficiens (strain DSM 44549 / YS-314 / AJ 12310 / JCM 11189 / NBRC 100395).